The chain runs to 459 residues: Putrescine aminotransferase (459 aa).

Pyridoxal 5'-phosphate-binding positions include 150 to 151 (GT) and Q274. The residue at position 300 (K300) is an N6-(pyridoxal phosphate)lysine. T332 is a binding site for pyridoxal 5'-phosphate.

It belongs to the class-III pyridoxal-phosphate-dependent aminotransferase family. Putrescine aminotransferase subfamily. Pyridoxal 5'-phosphate is required as a cofactor.

The catalysed reaction is an alkane-alpha,omega-diamine + 2-oxoglutarate = an omega-aminoaldehyde + L-glutamate. The enzyme catalyses putrescine + 2-oxoglutarate = 1-pyrroline + L-glutamate + H2O. It catalyses the reaction cadaverine + 2-oxoglutarate = 5-aminopentanal + L-glutamate. Its pathway is amine and polyamine degradation; putrescine degradation; 4-aminobutanal from putrescine (transaminase route): step 1/1. Its function is as follows. Catalyzes the aminotransferase reaction from putrescine to 2-oxoglutarate, leading to glutamate and 4-aminobutanal, which spontaneously cyclizes to form 1-pyrroline. This is the first step in one of two pathways for putrescine degradation, where putrescine is converted into 4-aminobutanoate (gamma-aminobutyrate or GABA) via 4-aminobutanal. Also functions as a cadaverine transaminase in a a L-lysine degradation pathway to succinate that proceeds via cadaverine, glutarate and L-2-hydroxyglutarate. The chain is Putrescine aminotransferase from Salmonella paratyphi B (strain ATCC BAA-1250 / SPB7).